Here is a 506-residue protein sequence, read N- to C-terminus: 2,3-bisphosphoglycerate-independent phosphoglycerate mutase (506 aa).

Residues Asp-13 and Ser-63 each coordinate Mn(2+). Residue Ser-63 is the Phosphoserine intermediate of the active site. Residues His-124, 153 to 154 (RD), Arg-183, Arg-189, 255 to 258 (RADR), and Lys-331 each bind substrate. Mn(2+) is bound by residues Asp-397, His-401, Asp-438, His-439, and His-457.

The protein belongs to the BPG-independent phosphoglycerate mutase family. In terms of assembly, monomer. Mn(2+) serves as cofactor.

It carries out the reaction (2R)-2-phosphoglycerate = (2R)-3-phosphoglycerate. Its pathway is carbohydrate degradation; glycolysis; pyruvate from D-glyceraldehyde 3-phosphate: step 3/5. In terms of biological role, catalyzes the interconversion of 2-phosphoglycerate and 3-phosphoglycerate. This chain is 2,3-bisphosphoglycerate-independent phosphoglycerate mutase, found in Ruegeria sp. (strain TM1040) (Silicibacter sp.).